We begin with the raw amino-acid sequence, 187 residues long: Adenine phosphoribosyltransferase (187 aa).

Residue 133–137 (ATGGS) coordinates AMP.

It belongs to the purine/pyrimidine phosphoribosyltransferase family. As to quaternary structure, homodimer. Requires Mg(2+) as cofactor.

It localises to the cytoplasm. It is found in the nucleus. It carries out the reaction AMP + diphosphate = 5-phospho-alpha-D-ribose 1-diphosphate + adenine. It participates in purine metabolism; AMP biosynthesis via salvage pathway; AMP from adenine: step 1/1. Catalyzes a salvage reaction resulting in the formation of AMP, that is energically less costly than de novo synthesis. In Kluyveromyces lactis (strain ATCC 8585 / CBS 2359 / DSM 70799 / NBRC 1267 / NRRL Y-1140 / WM37) (Yeast), this protein is Adenine phosphoribosyltransferase (APT1).